The following is a 144-amino-acid chain: L-fucose mutarotase (144 aa).

His22 serves as the catalytic Proton donor. Substrate contacts are provided by residues Asp30, Arg109, and 131–133 (YGN).

The protein belongs to the RbsD / FucU family. FucU mutarotase subfamily. In terms of assembly, homodecamer.

The protein resides in the cytoplasm. The catalysed reaction is alpha-L-fucose = beta-L-fucose. It participates in carbohydrate metabolism; L-fucose metabolism. In terms of biological role, involved in the anomeric conversion of L-fucose. This chain is L-fucose mutarotase, found in Histophilus somni (strain 2336) (Haemophilus somnus).